The chain runs to 490 residues: Cytochrome P450 2C20 (490 aa).

Cys435 contributes to the heme binding site.

The protein belongs to the cytochrome P450 family. The cofactor is heme.

The protein resides in the endoplasmic reticulum membrane. Its subcellular location is the microsome membrane. The enzyme catalyses an organic molecule + reduced [NADPH--hemoprotein reductase] + O2 = an alcohol + oxidized [NADPH--hemoprotein reductase] + H2O + H(+). In terms of biological role, cytochromes P450 are a group of heme-thiolate monooxygenases. In liver microsomes, this enzyme is involved in an NADPH-dependent electron transport pathway. It oxidizes a variety of structurally unrelated compounds, including steroids, fatty acids, and xenobiotics. The sequence is that of Cytochrome P450 2C20 (CYP2C20) from Macaca fascicularis (Crab-eating macaque).